The chain runs to 183 residues: NADH-ubiquinone oxidoreductase 20.8 kDa subunit (183 aa).

CHCH domains are found at residues 44–87 (GARC…IADI) and 88–130 (NKSC…LGLK). 4 short sequence motifs (cx9C motif) span residues 47-57 (CRDYNDDFMQC), 69-79 (CLKEGRRVTRC), 91-101 (CLEEFRKHWTC), and 112-122 (CRPAEWKLNKC). Disulfide bonds link C47–C79, C57–C69, C91–C122, and C101–C112. The interval 161–183 (EPFVPPTQTGDNNKAPAAASSSS) is disordered.

Belongs to the complex I NDUFA8 subunit family. As to quaternary structure, complex I is composed of about 40 different subunits. This is a component of the hydrophobic fraction. Requires iron-sulfur cluster as cofactor.

It is found in the mitochondrion inner membrane. Its function is as follows. Accessory subunit of the mitochondrial membrane respiratory chain NADH dehydrogenase (Complex I), that is believed not to be involved in catalysis. Complex I functions in the transfer of electrons from NADH to the respiratory chain. The immediate electron acceptor for the enzyme is believed to be ubiquinone. The sequence is that of NADH-ubiquinone oxidoreductase 20.8 kDa subunit from Neurospora crassa (strain ATCC 24698 / 74-OR23-1A / CBS 708.71 / DSM 1257 / FGSC 987).